A 480-amino-acid chain; its full sequence is Adenosylhomocysteinase (480 aa).

Residues Thr-63, Asp-142, and Glu-203 each coordinate substrate. An NAD(+)-binding site is contributed by 204–206 (TTT). Residues Lys-233 and Asp-237 each contribute to the substrate site. NAD(+) contacts are provided by residues Asn-238, 267–272 (GYGDVG), Glu-290, Asn-325, 346–348 (IGH), and Asn-394.

The protein belongs to the adenosylhomocysteinase family. The cofactor is NAD(+).

The protein resides in the cytoplasm. It carries out the reaction S-adenosyl-L-homocysteine + H2O = L-homocysteine + adenosine. Its pathway is amino-acid biosynthesis; L-homocysteine biosynthesis; L-homocysteine from S-adenosyl-L-homocysteine: step 1/1. Its function is as follows. May play a key role in the regulation of the intracellular concentration of adenosylhomocysteine. The protein is Adenosylhomocysteinase of Xanthomonas campestris pv. campestris (strain 8004).